The chain runs to 309 residues: Ribokinase (309 aa).

Substrate contacts are provided by residues 14 to 16 (NAD), 42 to 46 (GKGAN), and Glu143. ATP is bound by residues Asn187 and 223–228 (TLGSRG). K(+)-binding residues include Asp249 and Ile251. Residues 254-255 (GD) and His279 each bind ATP. Asp255 contacts substrate. Catalysis depends on Asp255, which acts as the Proton acceptor. The K(+) site is built by Ala285, Arg288, Gly290, and Ser294.

The protein belongs to the carbohydrate kinase PfkB family. Ribokinase subfamily. In terms of assembly, homodimer. Mg(2+) is required as a cofactor.

The protein resides in the cytoplasm. It carries out the reaction D-ribose + ATP = D-ribose 5-phosphate + ADP + H(+). It participates in carbohydrate metabolism; D-ribose degradation; D-ribose 5-phosphate from beta-D-ribopyranose: step 2/2. With respect to regulation, activated by a monovalent cation that binds near, but not in, the active site. The most likely occupant of the site in vivo is potassium. Ion binding induces a conformational change that may alter substrate affinity. In terms of biological role, catalyzes the phosphorylation of ribose at O-5 in a reaction requiring ATP and magnesium. The resulting D-ribose-5-phosphate can then be used either for sythesis of nucleotides, histidine, and tryptophan, or as a component of the pentose phosphate pathway. The polypeptide is Ribokinase (Escherichia coli O157:H7).